Reading from the N-terminus, the 668-residue chain is Bifunctional polymyxin resistance protein ArnA (668 aa).

The formyltransferase ArnAFT stretch occupies residues 1 to 307 (MSNKAVVFAY…ELGLVDGSLL (307 aa)). The active-site Proton donor; for formyltransferase activity is the histidine 106. (6R)-10-formyltetrahydrofolate-binding positions include arginine 116 and 138–142 (VKRAD). Positions 317 to 668 (RRTRVLILGV…IADRAKQEAR (352 aa)) are dehydrogenase ArnADH. NAD(+)-binding positions include aspartate 350 and 371–372 (DI). Residues alanine 396, tyrosine 401, and 435–436 (TS) each bind UDP-alpha-D-glucuronate. Glutamate 437 (proton acceptor; for decarboxylase activity) is an active-site residue. UDP-alpha-D-glucuronate is bound by residues arginine 463, asparagine 494, 528–537 (RLFDGGEQKR), and tyrosine 615. The active-site Proton donor; for decarboxylase activity is arginine 621.

It in the N-terminal section; belongs to the Fmt family. UDP-L-Ara4N formyltransferase subfamily. The protein in the C-terminal section; belongs to the NAD(P)-dependent epimerase/dehydratase family. UDP-glucuronic acid decarboxylase subfamily. Homohexamer, formed by a dimer of trimers.

It catalyses the reaction UDP-alpha-D-glucuronate + NAD(+) = UDP-beta-L-threo-pentopyranos-4-ulose + CO2 + NADH. It carries out the reaction UDP-4-amino-4-deoxy-beta-L-arabinose + (6R)-10-formyltetrahydrofolate = UDP-4-deoxy-4-formamido-beta-L-arabinose + (6S)-5,6,7,8-tetrahydrofolate + H(+). The protein operates within nucleotide-sugar biosynthesis; UDP-4-deoxy-4-formamido-beta-L-arabinose biosynthesis; UDP-4-deoxy-4-formamido-beta-L-arabinose from UDP-alpha-D-glucuronate: step 1/3. It functions in the pathway nucleotide-sugar biosynthesis; UDP-4-deoxy-4-formamido-beta-L-arabinose biosynthesis; UDP-4-deoxy-4-formamido-beta-L-arabinose from UDP-alpha-D-glucuronate: step 3/3. It participates in bacterial outer membrane biogenesis; lipopolysaccharide biosynthesis. Bifunctional enzyme that catalyzes the oxidative decarboxylation of UDP-glucuronic acid (UDP-GlcUA) to UDP-4-keto-arabinose (UDP-Ara4O) and the addition of a formyl group to UDP-4-amino-4-deoxy-L-arabinose (UDP-L-Ara4N) to form UDP-L-4-formamido-arabinose (UDP-L-Ara4FN). The modified arabinose is attached to lipid A and is required for resistance to polymyxin and cationic antimicrobial peptides. The chain is Bifunctional polymyxin resistance protein ArnA from Pseudomonas fluorescens (strain ATCC BAA-477 / NRRL B-23932 / Pf-5).